The sequence spans 243 residues: GTP cyclohydrolase 1 type 2 (243 aa).

A divalent metal cation is bound by residues His63, His64, Asp102, His209, and Glu213.

Belongs to the GTP cyclohydrolase I type 2/NIF3 family. In terms of assembly, homohexamer.

It carries out the reaction GTP + H2O = 7,8-dihydroneopterin 3'-triphosphate + formate + H(+). It functions in the pathway cofactor biosynthesis; 7,8-dihydroneopterin triphosphate biosynthesis; 7,8-dihydroneopterin triphosphate from GTP: step 1/1. Converts GTP to dihydroneopterin triphosphate. This Helicobacter pylori (strain J99 / ATCC 700824) (Campylobacter pylori J99) protein is GTP cyclohydrolase 1 type 2.